The following is a 55-amino-acid chain: Large ribosomal subunit protein bL33 (55 aa).

It belongs to the bacterial ribosomal protein bL33 family.

The sequence is that of Large ribosomal subunit protein bL33 from Renibacterium salmoninarum (strain ATCC 33209 / DSM 20767 / JCM 11484 / NBRC 15589 / NCIMB 2235).